We begin with the raw amino-acid sequence, 87 residues long: UPF0250 protein ECA1299 (87 aa).

Belongs to the UPF0250 family.

This chain is UPF0250 protein ECA1299, found in Pectobacterium atrosepticum (strain SCRI 1043 / ATCC BAA-672) (Erwinia carotovora subsp. atroseptica).